A 337-amino-acid polypeptide reads, in one-letter code: MGFKPFLEGGIAAIIAGALTHPLDLIKVRMQLQGEHSFSLDQNPNPNLSLDHNLPVKPYRPVFALDSLIGSISLLPLHIHAPSSSTRSVMTPFAVGAHIVKTEGPAALFSGVSATILRQMLYSATRMGIYDFLKRRWTDQLTGNFPLVTKITAGLIAGAVGSVVGNPADVAMVRMQADGSLPLNRRRNYKSVVDAIDRIARQEGVSSLWRGSWLTVNRAMIVTASQLATYDHVKEILVAGGRGTPGGIGTHVAASFAAGIVAAVASNPIDVVKTRMMNADKEIYGGPLDCAVKMVAEEGPMALYKGLVPTATRQGPFTMILFLTLEQVRGLLKDVKF.

Solcar repeat units follow at residues 4-136 (KPFL…LKRR), 145-236 (FPLV…VKEI), and 246-331 (GGIG…VRGL). 6 helical membrane passes run 6-26 (FLEG…LDLI), 105-125 (PAAL…YSAT), 151-171 (ITAG…ADVA), 210-230 (RGSW…LATY), 252-272 (VAAS…IDVV), and 304-324 (YKGL…LFLT).

Belongs to the mitochondrial carrier (TC 2.A.29) family.

The protein resides in the mitochondrion inner membrane. Its function is as follows. PUMPS are mitochondrial transporter proteins that create proton leaks across the inner mitochondrial membrane, thus uncoupling oxidative phosphorylation. This leads to a decrease in the efficiency of oxidative phosphorylation and an increase in heat production. May be involved in protecting plant cells against oxidative stress damage. Recombinant PUMP6, reconstituted into liposomes, transports a wide range of dicarboxylic acids including malate, oxaloacetate and succinate as well as phosphate, sulfate and thiosulfate. However, it is unknown if these transports are of any biological significance in vivo. The sequence is that of Mitochondrial uncoupling protein 6 (PUMP6) from Arabidopsis thaliana (Mouse-ear cress).